The chain runs to 315 residues: Lipoyl synthase (315 aa).

[4Fe-4S] cluster contacts are provided by cysteine 63, cysteine 68, cysteine 74, cysteine 89, cysteine 93, cysteine 96, and serine 303. In terms of domain architecture, Radical SAM core spans 75-292 (FSHGTATFMI…EKKAYDMGFR (218 aa)).

It belongs to the radical SAM superfamily. Lipoyl synthase family. Requires [4Fe-4S] cluster as cofactor.

It localises to the cytoplasm. The enzyme catalyses [[Fe-S] cluster scaffold protein carrying a second [4Fe-4S](2+) cluster] + N(6)-octanoyl-L-lysyl-[protein] + 2 oxidized [2Fe-2S]-[ferredoxin] + 2 S-adenosyl-L-methionine + 4 H(+) = [[Fe-S] cluster scaffold protein] + N(6)-[(R)-dihydrolipoyl]-L-lysyl-[protein] + 4 Fe(3+) + 2 hydrogen sulfide + 2 5'-deoxyadenosine + 2 L-methionine + 2 reduced [2Fe-2S]-[ferredoxin]. Its pathway is protein modification; protein lipoylation via endogenous pathway; protein N(6)-(lipoyl)lysine from octanoyl-[acyl-carrier-protein]: step 2/2. Functionally, catalyzes the radical-mediated insertion of two sulfur atoms into the C-6 and C-8 positions of the octanoyl moiety bound to the lipoyl domains of lipoate-dependent enzymes, thereby converting the octanoylated domains into lipoylated derivatives. This is Lipoyl synthase from Laribacter hongkongensis (strain HLHK9).